The chain runs to 80 residues: Acyl carrier protein (80 aa).

The region spanning 1-79 is the Carrier domain; sequence MSQEEILQKV…DAVKFIEAKK (79 aa). Ser39 is modified (O-(pantetheine 4'-phosphoryl)serine).

It belongs to the acyl carrier protein (ACP) family. 4'-phosphopantetheine is transferred from CoA to a specific serine of apo-ACP by AcpS. This modification is essential for activity because fatty acids are bound in thioester linkage to the sulfhydryl of the prosthetic group.

It localises to the cytoplasm. It functions in the pathway lipid metabolism; fatty acid biosynthesis. Functionally, carrier of the growing fatty acid chain in fatty acid biosynthesis. This Prochlorococcus marinus (strain MIT 9515) protein is Acyl carrier protein.